Consider the following 35-residue polypeptide: Photosystem II reaction center protein T (35 aa).

A helical membrane pass occupies residues 3 to 23 (ALVYTFLLVSTLGIIFFAIFF).

Belongs to the PsbT family. As to quaternary structure, PSII is composed of 1 copy each of membrane proteins PsbA, PsbB, PsbC, PsbD, PsbE, PsbF, PsbH, PsbI, PsbJ, PsbK, PsbL, PsbM, PsbT, PsbY, PsbZ, Psb30/Ycf12, at least 3 peripheral proteins of the oxygen-evolving complex and a large number of cofactors. It forms dimeric complexes.

The protein localises to the plastid. The protein resides in the chloroplast thylakoid membrane. Functionally, found at the monomer-monomer interface of the photosystem II (PS II) dimer, plays a role in assembly and dimerization of PSII. PSII is a light-driven water plastoquinone oxidoreductase, using light energy to abstract electrons from H(2)O, generating a proton gradient subsequently used for ATP formation. This chain is Photosystem II reaction center protein T, found in Pinus thunbergii (Japanese black pine).